The following is a 295-amino-acid chain: Pyridoxal 5'-phosphate synthase subunit PdxS (295 aa).

Aspartate 25 is a D-ribose 5-phosphate binding site. Residue lysine 82 is the Schiff-base intermediate with D-ribose 5-phosphate of the active site. Glycine 154 contacts D-ribose 5-phosphate. Residue arginine 166 participates in D-glyceraldehyde 3-phosphate binding. Residues glycine 215 and glycine 236–serine 237 each bind D-ribose 5-phosphate.

The protein belongs to the PdxS/SNZ family. In the presence of PdxT, forms a dodecamer of heterodimers.

The enzyme catalyses aldehydo-D-ribose 5-phosphate + D-glyceraldehyde 3-phosphate + L-glutamine = pyridoxal 5'-phosphate + L-glutamate + phosphate + 3 H2O + H(+). It participates in cofactor biosynthesis; pyridoxal 5'-phosphate biosynthesis. Catalyzes the formation of pyridoxal 5'-phosphate from ribose 5-phosphate (RBP), glyceraldehyde 3-phosphate (G3P) and ammonia. The ammonia is provided by the PdxT subunit. Can also use ribulose 5-phosphate and dihydroxyacetone phosphate as substrates, resulting from enzyme-catalyzed isomerization of RBP and G3P, respectively. The sequence is that of Pyridoxal 5'-phosphate synthase subunit PdxS from Dictyoglomus turgidum (strain DSM 6724 / Z-1310).